The primary structure comprises 290 residues: MKNTFSRLFGFGDKESEFELQDESHEEIDKKVYEEIQEIPIVNITPNRYQPRTVFDDARIEELALTIRTHGLIQPIVVRQYEDDKYEIIAGERRFRAATKLGWEKVPAIIKNLNDTETASVALIENLQREELTAIEEAVAYQKLIELHNLTQEALAQRLGKGQSTIANKLRLLKLPEEIKNALLEKSITERHARALIPLKNEELQLKVLQEIVEKQLNVKQTEERIAKLLEEAKPKRKAKQKAVSRDTRIAMNTIRQSLQMVADSGLNVNSEEEEFDEYYQITIQIPKKK.

The segment at residues 153–172 is a DNA-binding region (H-T-H motif); that stretch reads EALAQRLGKGQSTIANKLRL.

The protein belongs to the ParB family.

It localises to the cytoplasm. The protein resides in the nucleoid. In terms of biological role, effects nucleoid occlusion by binding relatively nonspecifically to DNA and preventing the assembly of the division machinery in the vicinity of the nucleoid, especially under conditions that disturb the cell cycle. It helps to coordinate cell division and chromosome segregation by preventing the formation of the Z ring through the nucleoid, which would cause chromosome breakage. The sequence is that of Nucleoid occlusion protein from Bacillus cereus (strain ATCC 10987 / NRS 248).